The chain runs to 159 residues: Ribose-5-phosphate isomerase B (159 aa).

D-ribulose 5-phosphate contacts are provided by residues 8–9 (DH) and 67–71 (GSGNG). The active-site Proton acceptor is Glu72. The active-site Proton donor is His99. Positions 100, 110, 134, and 138 each coordinate D-ribulose 5-phosphate.

It belongs to the LacAB/RpiB family. In terms of assembly, homodimer.

The enzyme catalyses aldehydo-D-ribose 5-phosphate = D-ribulose 5-phosphate. It functions in the pathway carbohydrate degradation; pentose phosphate pathway; D-ribose 5-phosphate from D-ribulose 5-phosphate (non-oxidative stage): step 1/1. Functionally, catalyzes the interconversion of ribulose-5-P and ribose-5-P. This is Ribose-5-phosphate isomerase B from Mycolicibacterium paratuberculosis (strain ATCC BAA-968 / K-10) (Mycobacterium paratuberculosis).